Reading from the N-terminus, the 135-residue chain is Large ribosomal subunit protein uL16c (135 aa).

This sequence belongs to the universal ribosomal protein uL16 family. Part of the 50S ribosomal subunit.

The protein resides in the plastid. The protein localises to the chloroplast. In Lactuca sativa (Garden lettuce), this protein is Large ribosomal subunit protein uL16c.